Here is a 102-residue protein sequence, read N- to C-terminus: Integration host factor subunit alpha (102 aa).

The protein belongs to the bacterial histone-like protein family. In terms of assembly, heterodimer of an alpha and a beta chain.

Its function is as follows. This protein is one of the two subunits of integration host factor, a specific DNA-binding protein that functions in genetic recombination as well as in transcriptional and translational control. This is Integration host factor subunit alpha from Albidiferax ferrireducens (strain ATCC BAA-621 / DSM 15236 / T118) (Rhodoferax ferrireducens).